Consider the following 393-residue polypeptide: Dual-specificity RNA methyltransferase RlmN (393 aa).

Glu-114 acts as the Proton acceptor in catalysis. A Radical SAM core domain is found at 120–359 (EGDRATLCVS…VIVRKTRGDD (240 aa)). An intrachain disulfide couples Cys-127 to Cys-364. [4Fe-4S] cluster-binding residues include Cys-134, Cys-138, and Cys-141. Residues 188-189 (GE), Ser-220, 242-244 (SLH), and Asn-321 contribute to the S-adenosyl-L-methionine site. Cys-364 functions as the S-methylcysteine intermediate in the catalytic mechanism.

Belongs to the radical SAM superfamily. RlmN family. The cofactor is [4Fe-4S] cluster.

The protein localises to the cytoplasm. The catalysed reaction is adenosine(2503) in 23S rRNA + 2 reduced [2Fe-2S]-[ferredoxin] + 2 S-adenosyl-L-methionine = 2-methyladenosine(2503) in 23S rRNA + 5'-deoxyadenosine + L-methionine + 2 oxidized [2Fe-2S]-[ferredoxin] + S-adenosyl-L-homocysteine. It carries out the reaction adenosine(37) in tRNA + 2 reduced [2Fe-2S]-[ferredoxin] + 2 S-adenosyl-L-methionine = 2-methyladenosine(37) in tRNA + 5'-deoxyadenosine + L-methionine + 2 oxidized [2Fe-2S]-[ferredoxin] + S-adenosyl-L-homocysteine. Functionally, specifically methylates position 2 of adenine 2503 in 23S rRNA and position 2 of adenine 37 in tRNAs. m2A2503 modification seems to play a crucial role in the proofreading step occurring at the peptidyl transferase center and thus would serve to optimize ribosomal fidelity. This is Dual-specificity RNA methyltransferase RlmN from Haemophilus ducreyi (strain 35000HP / ATCC 700724).